Here is a 129-residue protein sequence, read N- to C-terminus: UPF0344 protein SSP1805 (129 aa).

Transmembrane regions (helical) follow at residues 1-21, 36-56, 68-88, and 100-120; these read MLHM…AAYF, IHML…WVWI, MLLT…EVTI, and LMWT…ILPM.

The protein belongs to the UPF0344 family.

The protein resides in the cell membrane. This is UPF0344 protein SSP1805 from Staphylococcus saprophyticus subsp. saprophyticus (strain ATCC 15305 / DSM 20229 / NCIMB 8711 / NCTC 7292 / S-41).